Here is a 174-residue protein sequence, read N- to C-terminus: NADH-quinone oxidoreductase subunit B (174 aa).

The [4Fe-4S] cluster site is built by cysteine 51, cysteine 52, cysteine 116, and cysteine 146.

The protein belongs to the complex I 20 kDa subunit family. In terms of assembly, NDH-1 is composed of 14 different subunits. Subunits NuoB, C, D, E, F, and G constitute the peripheral sector of the complex. [4Fe-4S] cluster is required as a cofactor.

It localises to the cell inner membrane. The catalysed reaction is a quinone + NADH + 5 H(+)(in) = a quinol + NAD(+) + 4 H(+)(out). Its function is as follows. NDH-1 shuttles electrons from NADH, via FMN and iron-sulfur (Fe-S) centers, to quinones in the respiratory chain. The immediate electron acceptor for the enzyme in this species is believed to be ubiquinone. Couples the redox reaction to proton translocation (for every two electrons transferred, four hydrogen ions are translocated across the cytoplasmic membrane), and thus conserves the redox energy in a proton gradient. The polypeptide is NADH-quinone oxidoreductase subunit B (Anaplasma phagocytophilum (strain HZ)).